Reading from the N-terminus, the 410-residue chain is Probable ATP-dependent RNA helicase MG308 (410 aa).

A Helicase ATP-binding domain is found at 26-179 (VFKLWPFQNI…KKQVINTKVI (154 aa)). 39–46 (AETGSGKT) contacts ATP. A DEID box motif is present at residues 126–129 (DEID). A Helicase C-terminal domain is found at 190–357 (LVKHFVVHLN…DLKFLTENNQ (168 aa)).

The protein belongs to the DEAD box helicase family.

It catalyses the reaction ATP + H2O = ADP + phosphate + H(+). The chain is Probable ATP-dependent RNA helicase MG308 from Mycoplasma genitalium (strain ATCC 33530 / DSM 19775 / NCTC 10195 / G37) (Mycoplasmoides genitalium).